We begin with the raw amino-acid sequence, 457 residues long: DDB1- and CUL4-associated factor 10 (457 aa).

WD repeat units lie at residues 65-104 (RTHG…HIKT), 108-146 (AHED…SKVC), 150-189 (GHTS…EDGC), and 195-234 (FHTR…KSLE). Positions 246-265 (TASTSDMTSTSSDTRPSSSP) are enriched in low complexity. Residues 246–304 (TASTSDMTSTSSDTRPSSSPCHNSDLGPLFEKHMSRSSQREGASPRNSLEVLTPEVPGE) form a disordered region. The segment covering 281–292 (RSSQREGASPRN) has biased composition (polar residues). WD repeat units follow at residues 306 to 346 (DRGN…QEGA), 368 to 406 (VGRG…KELV), and 424 to 457 (SHKD…QPKF).

The protein belongs to the WD repeat DCAF10 family.

The protein operates within protein modification; protein ubiquitination. May function as a substrate receptor for CUL4-DDB1 E3 ubiquitin-protein ligase complex. This is DDB1- and CUL4-associated factor 10 (dcaf10) from Xenopus tropicalis (Western clawed frog).